We begin with the raw amino-acid sequence, 262 residues long: MTTGLLQGKRGIITGIANNMSISWAIAQLARKHGAELCFTYQSEILEKRVKPLAEEVGCNFVSELDVTNPESITNLFAEVKEKWGTFDFLLHGMAFSDRNELKGRYIDTSLGNFNNSLHISCYSLVELAREAEKLMNDGGSIVTLSYYGAEKVIPNYNVMGVAKAALEASVRYLANDMGENNIRVNAISAGPIKTLSGSVIGDFNSMLRSHAATAPLKRNTLQQDVAGAAVYLFSQLASGVTGEIHYVDCGYNVMGSNKIVG.

NAD(+) is bound by residues Gly15, 21–22 (SI), Gln42, 66–67 (DV), and Met94. Position 97 (Ser97) interacts with substrate. Catalysis depends on proton acceptor residues Tyr147 and Tyr157. NAD(+) contacts are provided by residues Lys164 and 193–197 (IKTLS).

This sequence belongs to the short-chain dehydrogenases/reductases (SDR) family. FabI subfamily. In terms of assembly, homotetramer.

The catalysed reaction is a 2,3-saturated acyl-[ACP] + NAD(+) = a (2E)-enoyl-[ACP] + NADH + H(+). The protein operates within lipid metabolism; fatty acid biosynthesis. Catalyzes the reduction of a carbon-carbon double bond in an enoyl moiety that is covalently linked to an acyl carrier protein (ACP). Involved in the elongation cycle of fatty acid which are used in the lipid metabolism. This is Enoyl-[acyl-carrier-protein] reductase [NADH] FabI (fabI) from Rickettsia bellii (strain RML369-C).